Reading from the N-terminus, the 122-residue chain is Large ribosomal subunit protein uL14 (122 aa).

It belongs to the universal ribosomal protein uL14 family. Part of the 50S ribosomal subunit. Forms a cluster with proteins L3 and L19. In the 70S ribosome, L14 and L19 interact and together make contacts with the 16S rRNA in bridges B5 and B8.

Binds to 23S rRNA. Forms part of two intersubunit bridges in the 70S ribosome. The sequence is that of Large ribosomal subunit protein uL14 from Microcystis aeruginosa (strain NIES-843 / IAM M-2473).